The chain runs to 420 residues: Glutamate-1-semialdehyde 2,1-aminomutase (420 aa).

At K259 the chain carries N6-(pyridoxal phosphate)lysine.

The protein belongs to the class-III pyridoxal-phosphate-dependent aminotransferase family. HemL subfamily. The cofactor is pyridoxal 5'-phosphate.

Its subcellular location is the cytoplasm. The catalysed reaction is (S)-4-amino-5-oxopentanoate = 5-aminolevulinate. It functions in the pathway porphyrin-containing compound metabolism; protoporphyrin-IX biosynthesis; 5-aminolevulinate from L-glutamyl-tRNA(Glu): step 2/2. This chain is Glutamate-1-semialdehyde 2,1-aminomutase, found in Sulfolobus acidocaldarius (strain ATCC 33909 / DSM 639 / JCM 8929 / NBRC 15157 / NCIMB 11770).